A 529-amino-acid chain; its full sequence is Peptide chain release factor 3 (529 aa).

The tr-type G domain maps to 11 to 280 (SKRRTFAIIS…GLTDWAPAPL (270 aa)). Residues 20 to 27 (SHPDAGKT), 88 to 92 (DTPGH), and 142 to 145 (NKLD) each bind GTP.

It belongs to the TRAFAC class translation factor GTPase superfamily. Classic translation factor GTPase family. PrfC subfamily.

It localises to the cytoplasm. In terms of biological role, increases the formation of ribosomal termination complexes and stimulates activities of RF-1 and RF-2. It binds guanine nucleotides and has strong preference for UGA stop codons. It may interact directly with the ribosome. The stimulation of RF-1 and RF-2 is significantly reduced by GTP and GDP, but not by GMP. This Vibrio vulnificus (strain CMCP6) protein is Peptide chain release factor 3.